Consider the following 2190-residue polypeptide: Voltage-dependent L-type calcium channel subunit alpha-1D (2190 aa).

Residues 1-10 (MQHHQQQQPE) show a composition bias toward low complexity. Disordered stretches follow at residues 1–44 (MQHH…SKQT) and 57–96 (QAKA…SNSR). The Cytoplasmic segment spans residues 1–121 (MQHHQQQQPE…RACISLVEWK (121 aa)). Composition is skewed to polar residues over residues 31-44 (PTTQ…SKQT) and 63-76 (NMNT…GSLS). Positions 77 to 88 (QRKRQQYAKSKK) are enriched in basic residues. One copy of the I repeat lies at 108-404 (NPIRRACISL…LVLGVLSGEF (297 aa)). Residues 122–140 (PFDIFILLSIFANCVALAV) form a helical membrane-spanning segment. At 141–158 (YIPFPEDDSNSTNHNLEK) the chain is on the extracellular side. A glycan (N-linked (GlcNAc...) asparagine) is linked at Asn150. The helical transmembrane segment at 159 to 178 (VEYAFLIIFTVETFLKIIAY) threads the bilayer. Residues 179-190 (GLLLHPNAYVRN) are Cytoplasmic-facing. The helical transmembrane segment at 191-209 (GWNLLDFVIVVVGLFSVIL) threads the bilayer. The Extracellular portion of the chain corresponds to 210 to 230 (EQLTKETEGGSHSGGKPGGFD). A helical transmembrane segment spans residues 231-249 (VKALRAFRVLRPLRLVSGV). At 250–268 (PSLQVVLNSIIKAMVPLLH) the chain is on the cytoplasmic side. A helical transmembrane segment spans residues 269–288 (IALLVLFVIIIYAIIGLELF). At 289–376 (IGKMHKSCFL…WVNDAIGCEW (88 aa)) the chain is on the extracellular side. Asn324 is a glycosylation site (N-linked (GlcNAc...) asparagine). Glu359 is a binding site for Ca(2+). A helical transmembrane segment spans residues 377–401 (PWIYFVSLIILGSFFVLNLVLGVLS). The Cytoplasmic segment spans residues 402–544 (GEFSKEREKA…RKCRAAVKSV (143 aa)). Residues 424 to 441 (QQLEEDLKGYLDWITQAE) are binding to the beta subunit. The tract at residues 478–500 (GRSSNKHASMPTSETESVNTENV) is disordered. The II repeat unit spans residues 530 to 776 (NRFNRRKCRA…VFLAIAVDNL (247 aa)). Residues 545–564 (TFYWLVIVLVFLNTLTISSE) form a helical membrane-spanning segment. The Extracellular portion of the chain corresponds to 565-579 (HYNQPDWLTQIQDIA). The chain crosses the membrane as a helical span at residues 580-598 (NKVLLALFTCEMLVKMYSL). At 599–606 (GLQAYFVS) the chain is on the cytoplasmic side. The helical transmembrane segment at 607–625 (LFNRFDCFVVCGGIVETIL) threads the bilayer. The Extracellular portion of the chain corresponds to 626–635 (VELEIMSPLG). Residues 636 to 654 (ISVFRCVRLLRIFKVTRHW) traverse the membrane as a helical segment. The Cytoplasmic segment spans residues 655 to 673 (ASLSNLVASLLNSMKSIAS). A helical membrane pass occupies residues 674 to 694 (LLLLLFLFIIIFSLLGMQLFG). Over 695 to 748 (GKFNFDETQTKRSTFDNFPQALLTVFQILTGEDWNAVMYDGIMAYGGPSSSGMI) the chain is Extracellular. Residue Glu726 participates in Ca(2+) binding. The helical transmembrane segment at 749-773 (VCIYFIILFICGNYILLNVFLAIAV) threads the bilayer. Over 774–907 (DNLADAESLN…VGCHRLINHH (134 aa)) the chain is Cytoplasmic. The span at 787–823 (KEEAEEKERKKNARKESLENKKSEKSEGDQKKPKDSK) shows a compositional bias: basic and acidic residues. Positions 787-869 (KEEAEEKERK…VPAGPRPRRI (83 aa)) are disordered. The span at 847–859 (VGEDEEDEEDEPE) shows a compositional bias: acidic residues. The stretch at 894–1176 (NPIRVGCHRL…IFVGFVIVTF (283 aa)) is one III repeat. Residues 908–926 (IFTNLILVFIMLSSVSLAA) form a helical membrane-spanning segment. Over 927 to 942 (EDPIRSHSFRNNILGY) the chain is Extracellular. A helical transmembrane segment spans residues 943 to 962 (ADYVFTSMFTFEIILKMTAF). Residues 963 to 974 (GAFLHKGSFCRN) are Cytoplasmic-facing. The chain crosses the membrane as a helical span at residues 975–993 (YFNLLDLLVVGVSLVSFGI). Residues 994–999 (QSSAIS) lie on the Extracellular side of the membrane. The chain crosses the membrane as a helical span at residues 1000-1019 (VVKILRVLRVLRPLRAINRA). Residues 1020-1038 (KGLKHVVQCVFVAIRTIGN) are Cytoplasmic-facing. The helical transmembrane segment at 1039–1058 (IMIVTTLLQFMFACIGVQLF) threads the bilayer. Residues 1059–1148 (KGKFYKCTDE…VGPVYNYRVE (90 aa)) lie on the Extracellular side of the membrane. The tract at residues 1096-1186 (RVWQNSDFNF…QEQGEQEYKN (91 aa)) is dihydropyridine binding. Glu1122 contributes to the Ca(2+) binding site. The chain crosses the membrane as a helical span at residues 1149–1169 (ISIFFIIYIIIIAFFMMNIFV). Residues 1170-1226 (GFVIVTFQEQGEQEYKNCELDKNQRQCVEYALKARPLRRYIPKNPYQYKFWYVVNST) are Cytoplasmic-facing. The stretch at 1213-1496 (NPYQYKFWYV…LFVAVIMDNF (284 aa)) is one IV repeat. Residues 1227–1245 (GFEYIMFVLIMLNTLCLAM) traverse the membrane as a helical segment. The Extracellular segment spans residues 1246 to 1260 (QHYGQSKLFNDAMDI). The chain crosses the membrane as a helical span at residues 1261 to 1280 (MNMVFTGVFTVEMVLKLIAF). Residues 1281–1297 (KPKIFVRKKERWLGYFS) are Cytoplasmic-facing. Residues 1298–1319 (DAWNTFDSLIVIGSIVDVVLSE) traverse the membrane as a helical segment. Residues 1320–1342 (ADPKPTETVTTDESGNSEDSARI) lie on the Extracellular side of the membrane. The helical transmembrane segment at 1343–1362 (SITFFRLFRVMRLVKLLSRG) threads the bilayer. Over 1363–1381 (EGIRTLLWTFIKSFQALPY) the chain is Cytoplasmic. A helical membrane pass occupies residues 1382–1401 (VALLIAMLFFIYAVIGMQVF). Residues 1402 to 1468 (GKVAMRDNNQ…GEEYTCGSNF (67 aa)) are Extracellular-facing. The dihydropyridine binding stretch occupies residues 1449 to 1515 (RCDPESDYNP…LGPHHLDEFK (67 aa)). The phenylalkylamine binding stretch occupies residues 1461 to 1504 (EYTCGSNFAIIYFISFYMLCAFLIINLFVAVIMDNFDYLTRDWS). A helical membrane pass occupies residues 1469–1493 (AIIYFISFYMLCAFLIINLFVAVIM). At 1494-2190 (DNFDYLTRDW…ADEMICITSL (697 aa)) the chain is on the cytoplasmic side. 4 disordered regions span residues 1736–1787 (THRP…NANL), 1803–1833 (FGSH…SRRT), 1917–1952 (HGFF…RSSF), and 1995–2025 (SSKA…HTPY). Over residues 1805–1823 (SHEHRSENGYHSYSRADHE) the composition is skewed to basic and acidic residues. Residues 1824–1833 (KRRRPSSRRT) show a composition bias toward basic residues.

It belongs to the calcium channel alpha-1 subunit (TC 1.A.1.11) family. CACNA1D subfamily. In terms of assembly, voltage-dependent calcium channels are multisubunit complexes, consisting of alpha-1, alpha-2, beta and delta subunits in a 1:1:1:1 ratio. The channel activity is directed by the pore-forming and voltage-sensitive alpha-1 subunit. In many cases, this subunit is sufficient to generate voltage-sensitive calcium channel activity. The auxiliary subunits beta and alpha-2/delta linked by a disulfide bridge regulate the channel activity. Interacts with RIMBP2. Expressed in the basilar papilla of the cochlea.

It is found in the membrane. It carries out the reaction Ca(2+)(in) = Ca(2+)(out). The isoform alpha-1D gives rise to L-type calcium currents. Long-lasting (L-type) calcium channels belong to the 'high-voltage activated' (HVA) group. This is Voltage-dependent L-type calcium channel subunit alpha-1D (CACNA1D) from Gallus gallus (Chicken).